Reading from the N-terminus, the 641-residue chain is Soluble starch synthase 1, chloroplastic/amyloplastic (641 aa).

The N-terminal 113 residues, 1–113 (MATAAGMGIG…DSIDKTIFVA (113 aa)), are a transit peptide targeting the chloroplast. The interval 62 to 96 (TFLVPTSTPPAPTQSPAPAPTPPPLPDSGVGEIEP) is disordered. Pro residues predominate over residues 68–87 (STPPAPTQSPAPAPTPPPLP). Lysine 147 is a binding site for ADP-alpha-D-glucose.

This sequence belongs to the glycosyltransferase 1 family. Bacterial/plant glycogen synthase subfamily.

The protein resides in the plastid. It localises to the chloroplast. The protein localises to the amyloplast. The catalysed reaction is [(1-&gt;4)-alpha-D-glucosyl](n) + ADP-alpha-D-glucose = [(1-&gt;4)-alpha-D-glucosyl](n+1) + ADP + H(+). The protein operates within glycan biosynthesis; starch biosynthesis. The sequence is that of Soluble starch synthase 1, chloroplastic/amyloplastic from Oryza sativa subsp. indica (Rice).